Reading from the N-terminus, the 110-residue chain is Large ribosomal subunit protein P2 (110 aa).

Position 59 is an O-(pantetheine 4'-phosphoryl)serine; in acyl carrier protein form (S59). Positions 62 to 110 (LASVPSGGAAPAAAAGGAAAGGAAEEKAEDKPAEKDEESDDDMGFGLFD) are disordered. The segment covering 63–84 (ASVPSGGAAPAAAAGGAAAGGA) has biased composition (low complexity). The span at 85–95 (AEEKAEDKPAE) shows a compositional bias: basic and acidic residues. At S100 the chain carries Phosphoserine; in ribosomal stalk form.

The protein belongs to the eukaryotic ribosomal protein P1/P2 family. In terms of assembly, the phosphorylated form is part of the ribosomal stalk involved in the interaction of the elongation factors with the ribosome during protein synthesis. The phosphopantetheinylated form is part of the 10S triacylglycerol biosynthetic complex involved in de novo fatty acid biosynthesis. 4'-phosphopantetheine is transferred from CoA to a specific serine by acpS. This modification is essential for activity because fatty acids are bound in thioester linkage to the sulfhydryl of the prosthetic group.

It localises to the cytoplasm. Probable bifunctional protein. The phosphorylated protein plays an important role in the elongation step of protein synthesis. The phosphopantetheinylated protein acts as an acyl carrier protein. The chain is Large ribosomal subunit protein P2 from Rhodotorula glutinis (Yeast).